The following is a 367-amino-acid chain: Aflatoxin B1 aldehyde reductase member 2 (367 aa).

A compositionally biased stretch (low complexity) spans 1–31; it reads MLRAASRAVGRAAVRSAQRSGTSVGRPLAMS. Residues 1–45 form a disordered region; that stretch reads MLRAASRAVGRAAVRSAQRSGTSVGRPLAMSRPPPPRAASGAPLR. The transit peptide at 1 to 46 directs the protein to the mitochondrion; it reads MLRAASRAVGRAAVRSAQRSGTSVGRPLAMSRPPPPRAASGAPLRP. At serine 40 the chain carries Phosphoserine. Threonine 48 carries the phosphothreonine modification. Aspartate 80 lines the NADP(+) pocket. The active-site Proton donor is the tyrosine 85. Position 136 is an N6-acetyllysine (lysine 136). Histidine 149 is a binding site for substrate. NADP(+)-binding positions include 179-180, glutamine 205, 234-244, and arginine 258; these read SN and NPLAGGLLTGK. The residue at position 244 (lysine 244) is an N6-succinyllysine. Substrate contacts are provided by tyrosine 268 and arginine 271. 326 to 334 is a binding site for NADP(+); sequence SSLEQLEQN. Substrate is bound at residue arginine 367.

Belongs to the aldo/keto reductase family. Aldo/keto reductase 2 subfamily. In terms of assembly, homodimer. As to expression, expressed in liver, kidney, testis and brain with low levels in skeletal muscle, spleen, heart and lung.

The protein localises to the mitochondrion. The protein resides in the golgi apparatus. It localises to the cytoplasm. The catalysed reaction is 4-hydroxybutanoate + NADP(+) = succinate semialdehyde + NADPH + H(+). Inhibited by citrate, succinate and tartrate. Functionally, catalyzes the NADPH-dependent reduction of succinic semialdehyde to gamma-hydroxybutyrate. May have an important role in producing the neuromodulator gamma-hydroxybutyrate (GHB). Has broad substrate specificity. Can reduce the dialdehyde protein-binding form of aflatoxin B1 (AFB1) to the non-binding AFB1 dialcohol. May be involved in protection of liver against the toxic and carcinogenic effects of AFB1, a potent hepatocarcinogen. This chain is Aflatoxin B1 aldehyde reductase member 2, found in Mus musculus (Mouse).